Consider the following 230-residue polypeptide: Type II restriction enzyme MjaV (230 aa).

It carries out the reaction Endonucleolytic cleavage of DNA to give specific double-stranded fragments with terminal 5'-phosphates.. A P subtype restriction enzyme that recognizes the double-stranded sequence 5'-GTAC-3'; the cleavage site is unknown. The protein is Type II restriction enzyme MjaV (mjaVR) of Methanocaldococcus jannaschii (strain ATCC 43067 / DSM 2661 / JAL-1 / JCM 10045 / NBRC 100440) (Methanococcus jannaschii).